A 217-amino-acid chain; its full sequence is Flagellin B1 (217 aa).

A propeptide spanning residues 1 to 12 is cleaved from the precursor; it reads MKVFEFLKGKRG.

The protein belongs to the archaeal flagellin family.

The protein resides in the archaeal flagellum. Flagellin is the subunit protein which polymerizes to form the filaments of archaeal flagella. The polypeptide is Flagellin B1 (flaB1) (Methanocaldococcus jannaschii (strain ATCC 43067 / DSM 2661 / JAL-1 / JCM 10045 / NBRC 100440) (Methanococcus jannaschii)).